The primary structure comprises 524 residues: Glucose-6-phosphate isomerase (524 aa).

Glu322 acts as the Proton donor in catalysis. Residues His351 and Lys453 contribute to the active site.

The protein belongs to the GPI family.

It localises to the cytoplasm. The catalysed reaction is alpha-D-glucose 6-phosphate = beta-D-fructose 6-phosphate. It functions in the pathway carbohydrate biosynthesis; gluconeogenesis. The protein operates within carbohydrate degradation; glycolysis; D-glyceraldehyde 3-phosphate and glycerone phosphate from D-glucose: step 2/4. In terms of biological role, catalyzes the reversible isomerization of glucose-6-phosphate to fructose-6-phosphate. This is Glucose-6-phosphate isomerase from Prochlorococcus marinus (strain NATL2A).